The chain runs to 664 residues: CRISPR-associated DNA-binding protein Cas12m (664 aa).

The segment at 1-137 is recognition domain (REC1-N); sequence MKRVTITIDG…AKYRELIGSD (137 aa). Residues 138 to 212 are recognition domain (REC2); it reads EETAQMDTEI…AAKDRIRAAG (75 aa). The tract at residues 213-270 is recognition domain (REC1-C); the sequence is NDIENLEKDRQAAVIKAYNNSGLWWGNYNAVLESYKKARIKALKDGAELKYHRFDGSG. Residues 271-390 form a wedge domain (WED) region; the sequence is RFTNQIQGGM…VWSVVFTFTT (120 aa). The interval 391–404 is linker; it reads DCPTYDQRSSTGNR. The tract at residues 405-618 is ruvC-I; the sequence is CGLNLGWKKQ…KNGTQIEQVS (214 aa). Residues 618–650 are target nucleic-acid binding (TNB); sequence STASSATCSACKGKMEQVDGIMWRCRECRALVD. Positions 625, 628, 642, and 645 each coordinate Zn(2+). The interval 651–664 is ruvC-II; that stretch reads QDINAAANLFREVL. Aspartate 652 provides a ligand contact to Mg(2+).

The protein belongs to the CRISPR-associated DNA-binding protein Cas12m family. It depends on Mg(2+) as a cofactor. The cofactor is Zn(2+).

In terms of biological role, CRISPR (clustered regularly interspaced short palindromic repeat), is an adaptive immune system that provides protection against mobile genetic elements (viruses, transposable elements and conjugative plasmids). CRISPR clusters contain sequences complementary to antecedent mobile elements and target invading nucleic acids. CRISPR clusters are transcribed and processed into CRISPR RNA (crRNA). Recognizes a short motif in the CRISPR repeat sequences (the 5' PAM or protospacer adjacent motif, 5'-CCN-3' in this organism) to help distinguish self versus nonself, as targets within the bacterial CRISPR locus do not have PAMs. Cas12m-crRNA binds DNA in a PAM-dependent, crRNA-guided fashion. DNA-binding probably inhibits transcription, leading to gene silencing. Upon expression in E.coli as a CRISPR region preferentially binds to its associated crRNA. Probably required for pre-crRNA processing to mature crRNA. This Pelobacter propionicus (strain DSM 2379 / NBRC 103807 / OttBd1) protein is CRISPR-associated DNA-binding protein Cas12m.